The sequence spans 131 residues: MSWQQYVDDHLMCDIDGNRLTAAAILGQDGSVWSQSATFPAFKPEEIAAILKDFDQPGTLAPTGLFLGGTKYMVIQGEAGAVIRGKKGSGGITVKKTNQALIIGIYDEPLTPGQCNMIVERLGDYLIEQGL.

This sequence belongs to the profilin family. In terms of assembly, occurs in many kinds of cells as a complex with monomeric actin in a 1:1 ratio.

The protein resides in the cytoplasm. It is found in the cytoskeleton. In terms of biological role, binds to actin and affects the structure of the cytoskeleton. At high concentrations, profilin prevents the polymerization of actin, whereas it enhances it at low concentrations. By binding to PIP2, it inhibits the formation of IP3 and DG. This chain is Profilin, found in Prunus dulcis (Almond).